We begin with the raw amino-acid sequence, 478 residues long: Trigger factor (478 aa).

The segment covering 154–167 has biased composition (basic and acidic residues); sequence MAKDSRSFEPREEG. Disordered stretches follow at residues 154 to 173 and 441 to 478; these read MAKD…AQSG and KEAL…KAAG. Positions 173 to 258 constitute a PPIase FKBP-type domain; it reads GDRVTIDFVG…VKAVAAPGET (86 aa).

The protein belongs to the FKBP-type PPIase family. Tig subfamily.

Its subcellular location is the cytoplasm. It carries out the reaction [protein]-peptidylproline (omega=180) = [protein]-peptidylproline (omega=0). Involved in protein export. Acts as a chaperone by maintaining the newly synthesized protein in an open conformation. Functions as a peptidyl-prolyl cis-trans isomerase. This is Trigger factor from Methylorubrum extorquens (strain CM4 / NCIMB 13688) (Methylobacterium extorquens).